Consider the following 475-residue polypeptide: UDP-glycosyltransferase 708A6 (475 aa).

UDP-alpha-D-glucose-binding positions include serine 286, 348–349, 366–374, and 388–391; these read WV, HCGWNSLTE, and FGDQ.

It belongs to the UDP-glycosyltransferase family. In terms of tissue distribution, expressed in radicles, hypocotyls and juvenile leaves. Expressed at low levels in roots.

Its function is as follows. Bifunctional glycosyltransferase that can produce both C- and O-glycosidated flavonoids. Converts 2-hydroxynaringenin to isovitexin. Converts eriodictyol to orientin and isoorientin. Converts naringenin and eriodictyol to naringenin 7-O-glucoside and eriodictyol 7-O-glucoside, respectively. This is UDP-glycosyltransferase 708A6 from Zea mays (Maize).